Reading from the N-terminus, the 180-residue chain is MVEFEIVKGDITRFPAEAIVNAANRYLEHGGGVAYAIAKAAAGDPREYIRISKEAMREQLGKDHIEHGEVVVTPAMRLEKHGIRYVIHTVGPYCGGIWDEDKKEKLRKAILGALRKAEELGVKTIAFPAVSAGIYGCPLEEVVKTFKEVIDEFEREAGSVERVYLVLYSEKDYERALRAV.

Residues 1–180 (MVEFEIVKGD…KDYERALRAV (180 aa)) enclose the Macro domain.

This is an uncharacterized protein from Thermococcus kodakarensis (strain ATCC BAA-918 / JCM 12380 / KOD1) (Pyrococcus kodakaraensis (strain KOD1)).